Consider the following 119-residue polypeptide: Ribonuclease P protein component (119 aa).

It belongs to the RnpA family. Consists of a catalytic RNA component (M1 or rnpB) and a protein subunit.

The enzyme catalyses Endonucleolytic cleavage of RNA, removing 5'-extranucleotides from tRNA precursor.. RNaseP catalyzes the removal of the 5'-leader sequence from pre-tRNA to produce the mature 5'-terminus. It can also cleave other RNA substrates such as 4.5S RNA. The protein component plays an auxiliary but essential role in vivo by binding to the 5'-leader sequence and broadening the substrate specificity of the ribozyme. In Streptococcus gordonii (strain Challis / ATCC 35105 / BCRC 15272 / CH1 / DL1 / V288), this protein is Ribonuclease P protein component.